Here is a 225-residue protein sequence, read N- to C-terminus: Proteoglycan 3 (225 aa).

Residues 1 to 17 form the signal peptide; it reads MQCLLLLPFLLLGTVSA. The region spanning 107 to 224 is the C-type lectin domain; that stretch reads CKICRYLLVR…CDKQLPFVCS (118 aa). Cystine bridges form between Cys128/Cys223 and Cys200/Cys215.

Expressed in bone marrow. Not detected in placenta.

It is found in the cytoplasmic granule. In terms of biological role, possesses similar cytotoxic and cytostimulatory activities to PRG2/MBP. In vitro, stimulates neutrophil superoxide production and IL8 release, and histamine and leukotriene C4 release from basophils. The sequence is that of Proteoglycan 3 from Homo sapiens (Human).